Here is a 61-residue protein sequence, read N- to C-terminus: Large ribosomal subunit protein uL30 (61 aa).

The protein belongs to the universal ribosomal protein uL30 family. As to quaternary structure, part of the 50S ribosomal subunit.

In Thermosipho africanus (strain TCF52B), this protein is Large ribosomal subunit protein uL30.